Here is a 68-residue protein sequence, read N- to C-terminus: Large ribosomal subunit protein bL31 (68 aa).

Zn(2+)-binding residues include C16, C18, C36, and C39.

Belongs to the bacterial ribosomal protein bL31 family. Type A subfamily. As to quaternary structure, part of the 50S ribosomal subunit. Zn(2+) serves as cofactor.

In terms of biological role, binds the 23S rRNA. This is Large ribosomal subunit protein bL31 from Sorangium cellulosum (strain So ce56) (Polyangium cellulosum (strain So ce56)).